The sequence spans 467 residues: Zinc finger protein ZIC 3 (467 aa).

Residues 66–107 (LSSGQSSAFTPQGSGYANALGHHHHHHHHHHHTSQVPSYGGA) are disordered. Positions 67 to 80 (SSGQSSAFTPQGSG) are enriched in polar residues. Residues 86–98 (GHHHHHHHHHHHT) show a composition bias toward basic residues. Lys-248 is covalently cross-linked (Glycyl lysine isopeptide (Lys-Gly) (interchain with G-Cter in SUMO2)). The C2H2-type 1; atypical zinc-finger motif lies at 251–286 (LSCKWIDEAQLSRPKKSCDRTFSTMHELVTHVTMEH). Residues 295 to 322 (HVCYWEECPREGKSFKAKYKLVNHIRVH) form a C2H2-type 2; atypical zinc finger. 2 short sequence motifs (nuclear localization signal) span residues 297–322 (CYWEECPREGKSFKAKYKLVNHIRVH) and 330–352 (CPFPGCGKIFARSENLKIHKRTH). C2H2-type zinc fingers lie at residues 328–352 (FPCPFPGCGKIFARSENLKIHKRTH), 358–382 (FKCEFEGCDRRFANSSDRKKHMHVH), and 388–410 (YICKVCDKSYTHPSSLRKHMKVH). The interval 404 to 467 (RKHMKVHESQ…LPPNFNEWYV (64 aa)) is disordered. Low complexity predominate over residues 412–428 (SQGSDSSPAASSGYESS). Residues 435–455 (SANSKDTTKTPSAVQTSTSHN) are compositionally biased toward polar residues.

This sequence belongs to the GLI C2H2-type zinc-finger protein family. In terms of assembly, interacts (via the C2H2-type domains 3, 4 and 5) with MDFIC (via the C2H2-type domains 3, 4 and 5); the interaction reduces its transcriptional activity. Interacts with KPNA1 and KPNA6. Interacts (via C2H2-type domains 3, 4 and 5) with GLI3; the interaction enhances its transcriptional activity.

The protein resides in the nucleus. The protein localises to the cytoplasm. In terms of biological role, acts as a transcriptional activator. Required in the earliest stages in both axial midline development and left-right (LR) asymmetry specification. Binds to the minimal GLI-consensus sequence 5'-GGGTGGTC-3'. This chain is Zinc finger protein ZIC 3 (ZIC3), found in Homo sapiens (Human).